The primary structure comprises 208 residues: Redox-sensing transcriptional repressor Rex (208 aa).

The segment at residues 16–55 (LYYRCLSELNEKGEDKVSSAVLERLLKIDAATVRRDFSYF) is a DNA-binding region (H-T-H motif). An NAD(+)-binding site is contributed by 90 to 95 (GVGNLG).

The protein belongs to the transcriptional regulatory Rex family. In terms of assembly, homodimer.

Its subcellular location is the cytoplasm. Functionally, modulates transcription in response to changes in cellular NADH/NAD(+) redox state. In Pediococcus pentosaceus (strain ATCC 25745 / CCUG 21536 / LMG 10740 / 183-1w), this protein is Redox-sensing transcriptional repressor Rex.